A 228-amino-acid chain; its full sequence is Cytidylate kinase (228 aa).

Gly17 to Thr25 contacts ATP.

The protein belongs to the cytidylate kinase family. Type 1 subfamily.

It localises to the cytoplasm. The enzyme catalyses CMP + ATP = CDP + ADP. The catalysed reaction is dCMP + ATP = dCDP + ADP. The polypeptide is Cytidylate kinase (Burkholderia mallei (strain NCTC 10247)).